The sequence spans 164 residues: MKSLTLLTICAVLSVSLSMNDLALDVVLDPDPAAEPAPAADSSASSSASSSSSSASDSSASASDSSDSDSSSSSSSSSSSESASAEAMAEDPAAATEPEVIMKRDLASVLLRRKRAAGPAAAAFTLTQVESLSEVCELNLACEHMAETAGIVAAYTAYYGPPPF.

The signal sequence occupies residues 1–18 (MKSLTLLTICAVLSVSLS). Positions 19–115 (MNDLALDVVL…LASVLLRRKR (97 aa)) are excised as a propeptide. Low complexity predominate over residues 30-95 (PDPAAEPAPA…EAMAEDPAAA (66 aa)). Positions 30–99 (PDPAAEPAPA…EDPAAATEPE (70 aa)) are disordered. One can recognise a Gla domain in the interval 128–160 (QVESLSEVCELNLACEHMAETAGIVAAYTAYYG). E130, E134, and E137 together coordinate Ca(2+). 4-carboxyglutamate occurs at positions 130, 134, and 137. C136 and C142 are joined by a disulfide.

Belongs to the osteocalcin/matrix Gla protein family. In terms of processing, gamma-carboxyglutamate residues are formed by vitamin K dependent carboxylation. These residues are essential for the binding of calcium.

It is found in the secreted. Binds strongly to apatite and calcium. The chain is Osteocalcin 2b from Oncorhynchus mykiss (Rainbow trout).